We begin with the raw amino-acid sequence, 176 residues long: NAD(P)H-quinone oxidoreductase subunit 6, chloroplastic (176 aa).

Transmembrane regions (helical) follow at residues I10–T30, I33–L53, V60–F80, I95–I115, and F152–T172.

It belongs to the complex I subunit 6 family. NDH is composed of at least 16 different subunits, 5 of which are encoded in the nucleus.

The protein resides in the plastid. The protein localises to the chloroplast thylakoid membrane. It catalyses the reaction a plastoquinone + NADH + (n+1) H(+)(in) = a plastoquinol + NAD(+) + n H(+)(out). It carries out the reaction a plastoquinone + NADPH + (n+1) H(+)(in) = a plastoquinol + NADP(+) + n H(+)(out). NDH shuttles electrons from NAD(P)H:plastoquinone, via FMN and iron-sulfur (Fe-S) centers, to quinones in the photosynthetic chain and possibly in a chloroplast respiratory chain. The immediate electron acceptor for the enzyme in this species is believed to be plastoquinone. Couples the redox reaction to proton translocation, and thus conserves the redox energy in a proton gradient. The sequence is that of NAD(P)H-quinone oxidoreductase subunit 6, chloroplastic (ndhG) from Zea mays (Maize).